The following is a 421-amino-acid chain: WD repeat and SOCS box-containing protein 1 (421 aa).

WD repeat units lie at residues 124-165 (SRCV…LLLN), 168-208 (DHIE…NMVK), 212-251 (AHQN…MIRK), 254-293 (GHHH…LLME), and 309-346 (ANDR…DCPV). The SOCS box domain occupies 372 to 421 (DGSVYFWATPRQVPSLQHICRMSIRRVMSTQEVQKLPVPSKILAFLSYRG).

As to quaternary structure, interacts with DIO2. Component of the probable ECS(WSB1) E3 ubiquitin-protein ligase complex which contains CUL5, RNF7/RBX2, Elongin BC complex and WSB1. Component of a probable ECS-like E3 ubiquitin-protein ligase complex which contains CUL5, RBX1, Elongin BC complex and WSB1. Interacts with CUL5, RNF7, ELOB and ELOC. Binds to HIPK2 through WD40 repeats.

Its pathway is protein modification; protein ubiquitination. Functionally, probable substrate-recognition component of a SCF-like ECS (Elongin-Cullin-SOCS-box protein) E3 ubiquitin ligase complex which mediates the ubiquitination and subsequent proteasomal degradation of target proteins. Recognizes type II iodothyronine deiodinase/DIO2. Confers constitutive instability to HIPK2 through proteasomal degradation. This Mus musculus (Mouse) protein is WD repeat and SOCS box-containing protein 1 (Wsb1).